The primary structure comprises 298 residues: Lipoyl synthase (298 aa).

Cys-43, Cys-48, Cys-54, Cys-69, Cys-73, Cys-76, and Ser-280 together coordinate [4Fe-4S] cluster. The Radical SAM core domain maps to 55 to 269 (FSSGTATFLI…AACGRGMGIP (215 aa)).

The protein belongs to the radical SAM superfamily. Lipoyl synthase family. The cofactor is [4Fe-4S] cluster.

The protein localises to the cytoplasm. It catalyses the reaction [[Fe-S] cluster scaffold protein carrying a second [4Fe-4S](2+) cluster] + N(6)-octanoyl-L-lysyl-[protein] + 2 oxidized [2Fe-2S]-[ferredoxin] + 2 S-adenosyl-L-methionine + 4 H(+) = [[Fe-S] cluster scaffold protein] + N(6)-[(R)-dihydrolipoyl]-L-lysyl-[protein] + 4 Fe(3+) + 2 hydrogen sulfide + 2 5'-deoxyadenosine + 2 L-methionine + 2 reduced [2Fe-2S]-[ferredoxin]. It participates in protein modification; protein lipoylation via endogenous pathway; protein N(6)-(lipoyl)lysine from octanoyl-[acyl-carrier-protein]: step 2/2. In terms of biological role, catalyzes the radical-mediated insertion of two sulfur atoms into the C-6 and C-8 positions of the octanoyl moiety bound to the lipoyl domains of lipoate-dependent enzymes, thereby converting the octanoylated domains into lipoylated derivatives. The sequence is that of Lipoyl synthase from Nitratidesulfovibrio vulgaris (strain DP4) (Desulfovibrio vulgaris).